The primary structure comprises 335 residues: Tetraacyldisaccharide 4'-kinase (335 aa).

Thr-58–Thr-65 provides a ligand contact to ATP.

Belongs to the LpxK family.

It carries out the reaction a lipid A disaccharide + ATP = a lipid IVA + ADP + H(+). Its pathway is glycolipid biosynthesis; lipid IV(A) biosynthesis; lipid IV(A) from (3R)-3-hydroxytetradecanoyl-[acyl-carrier-protein] and UDP-N-acetyl-alpha-D-glucosamine: step 6/6. Transfers the gamma-phosphate of ATP to the 4'-position of a tetraacyldisaccharide 1-phosphate intermediate (termed DS-1-P) to form tetraacyldisaccharide 1,4'-bis-phosphate (lipid IVA). The chain is Tetraacyldisaccharide 4'-kinase from Shewanella sp. (strain MR-7).